Consider the following 529-residue polypeptide: Bifunctional purine biosynthesis protein PurH (529 aa).

Positions 1-148 (MQQRRPVRRA…KNHKDVAIVV (148 aa)) constitute an MGS-like domain.

The protein belongs to the PurH family.

The enzyme catalyses (6R)-10-formyltetrahydrofolate + 5-amino-1-(5-phospho-beta-D-ribosyl)imidazole-4-carboxamide = 5-formamido-1-(5-phospho-D-ribosyl)imidazole-4-carboxamide + (6S)-5,6,7,8-tetrahydrofolate. It carries out the reaction IMP + H2O = 5-formamido-1-(5-phospho-D-ribosyl)imidazole-4-carboxamide. It functions in the pathway purine metabolism; IMP biosynthesis via de novo pathway; 5-formamido-1-(5-phospho-D-ribosyl)imidazole-4-carboxamide from 5-amino-1-(5-phospho-D-ribosyl)imidazole-4-carboxamide (10-formyl THF route): step 1/1. It participates in purine metabolism; IMP biosynthesis via de novo pathway; IMP from 5-formamido-1-(5-phospho-D-ribosyl)imidazole-4-carboxamide: step 1/1. The sequence is that of Bifunctional purine biosynthesis protein PurH from Salmonella agona (strain SL483).